We begin with the raw amino-acid sequence, 334 residues long: NADH dehydrogenase (ubiquinone) complex I, assembly factor 6 homolog (334 aa).

The transit peptide at 1 to 11 directs the protein to the mitochondrion; the sequence is MRRLVRNWNCR.

Belongs to the NDUFAF6 family. In terms of assembly, associates with mitochondrial complex I assembly intermediates during its biogenesis. Forms a complex including sicily, ND-42 and Hsp83; the complex is necessary to chaperone ND-42 in the cytoplasm before mitochondrial import; the interaction between sicily and ND-42 is direct and occurs preferably between the unprocessed forms in the cytoplasm; the interaction with Hsp83 is direct. Interacts with ND-30; interaction is stronger between the unprocessed forms in the cytoplasm. Expressed in the ventral nerve cord, larval brain, motor neuron axons, imaginal disks, and muscles (at protein level).

Its subcellular location is the mitochondrion inner membrane. It localises to the cytoplasm. The protein localises to the cytosol. Involved in the assembly of mitochondrial NADH:ubiquinone oxidoreductase complex (Complex I) at early stages. Interacts with cytosolic Hsp90 to chaperone the Complex I subunit ND-42 in the cytoplasm. The chain is NADH dehydrogenase (ubiquinone) complex I, assembly factor 6 homolog from Drosophila melanogaster (Fruit fly).